The chain runs to 501 residues: Glycerol kinase (501 aa).

T14 is an ADP binding site. Residues T14, T15, and S16 each coordinate ATP. T14 is a sn-glycerol 3-phosphate binding site. R18 is an ADP binding site. 3 residues coordinate sn-glycerol 3-phosphate: R84, E85, and Y136. Glycerol-binding residues include R84, E85, and Y136. Residue H231 is modified to Phosphohistidine; by HPr. D245 lines the sn-glycerol 3-phosphate pocket. 2 residues coordinate glycerol: D245 and Q246. T267 and G310 together coordinate ADP. T267, G310, Q314, and G411 together coordinate ATP. Positions 411 and 415 each coordinate ADP.

The protein belongs to the FGGY kinase family. In terms of assembly, homotetramer and homodimer (in equilibrium). In terms of processing, the phosphoenolpyruvate-dependent sugar phosphotransferase system (PTS), including enzyme I, and histidine-containing protein (HPr) are required for the phosphorylation of His-231, which leads to the activation of the enzyme.

It carries out the reaction glycerol + ATP = sn-glycerol 3-phosphate + ADP + H(+). It participates in polyol metabolism; glycerol degradation via glycerol kinase pathway; sn-glycerol 3-phosphate from glycerol: step 1/1. Its activity is regulated as follows. Activated by phosphorylation and inhibited by fructose 1,6-bisphosphate (FBP). Its function is as follows. Key enzyme in the regulation of glycerol uptake and metabolism. Catalyzes the phosphorylation of glycerol to yield sn-glycerol 3-phosphate. This Enterococcus faecalis (strain ATCC 700802 / V583) protein is Glycerol kinase.